Consider the following 401-residue polypeptide: Phosrestin-1 (401 aa).

This sequence belongs to the arrestin family.

Directly interacts with light-activated rhodopsin thereby activating the phosphorylation of metarhodopsin. Inhibits the dephosphorylation of metarhodopsin. This Calliphora vicina (Blue blowfly) protein is Phosrestin-1 (ARR2).